The primary structure comprises 708 residues: ATP-dependent DNA helicase Hel308 (708 aa).

Residues Met-1–Thr-29 carry the Q motif motif. Residues Gln-28 and Ser-46–Thr-53 contribute to the ATP site. In terms of domain architecture, Helicase ATP-binding spans Lys-33–Asn-196. A DEAH box motif is present at residues Asp-145–His-148. Residues His-229–Gly-435 enclose the Helicase C-terminal domain.

Belongs to the helicase family. Hel308 subfamily. As to quaternary structure, monomer.

It catalyses the reaction Couples ATP hydrolysis with the unwinding of duplex DNA by translocating in the 3'-5' direction.. It carries out the reaction ATP + H2O = ADP + phosphate + H(+). DNA-dependent ATPase and 3'-5' DNA helicase that may be involved in repair of stalled replication forks. The chain is ATP-dependent DNA helicase Hel308 from Saccharolobus solfataricus (strain ATCC 35092 / DSM 1617 / JCM 11322 / P2) (Sulfolobus solfataricus).